The following is a 264-amino-acid chain: Cell division protein DivIB (264 aa).

Over 1–23 (MAVYEERIPQVKQQRPRRRGNRK) the chain is Cytoplasmic. A helical membrane pass occupies residues 24-44 (LVFLLVLFFLTILIIVFIRSP). The Extracellular portion of the chain corresponds to 45–264 (YSKVQEIRVT…GQEQPQQPQQ (220 aa)). A POTRA domain is found at 46-114 (SKVQEIRVTG…GLITLHITEQ (69 aa)).

The protein belongs to the FtsQ/DivIB family. DivIB subfamily.

It is found in the cell membrane. Cell division protein that may be involved in stabilizing or promoting the assembly of the division complex. The protein is Cell division protein DivIB of Brevibacillus brevis (strain 47 / JCM 6285 / NBRC 100599).